Consider the following 210-residue polypeptide: Large ribosomal subunit protein uL3 (210 aa).

The protein belongs to the universal ribosomal protein uL3 family. Part of the 50S ribosomal subunit. Forms a cluster with proteins L14 and L19.

Its function is as follows. One of the primary rRNA binding proteins, it binds directly near the 3'-end of the 23S rRNA, where it nucleates assembly of the 50S subunit. The sequence is that of Large ribosomal subunit protein uL3 from Geobacter sulfurreducens (strain ATCC 51573 / DSM 12127 / PCA).